Reading from the N-terminus, the 190-residue chain is Dual specificity protein phosphatase 21 (190 aa).

The Tyrosine-protein phosphatase domain occupies 21–162; it reads SFSQITRSLF…LINYEFKLFN (142 aa). A sufficient for mitochondrial localization region spans residues 43-128; the sequence is LSSNRITAIV…AYLMKYHSMS (86 aa). Cysteine 106 acts as the Phosphocysteine intermediate in catalysis.

It belongs to the protein-tyrosine phosphatase family. Non-receptor class dual specificity subfamily. Microtubule inner protein component of sperm flagellar doublet microtubules. Expressed in testis.

The protein resides in the cytoplasm. The protein localises to the nucleus. It localises to the mitochondrion inner membrane. Its subcellular location is the cytoskeleton. It is found in the flagellum axoneme. The catalysed reaction is O-phospho-L-tyrosyl-[protein] + H2O = L-tyrosyl-[protein] + phosphate. The enzyme catalyses O-phospho-L-seryl-[protein] + H2O = L-seryl-[protein] + phosphate. It catalyses the reaction O-phospho-L-threonyl-[protein] + H2O = L-threonyl-[protein] + phosphate. In terms of biological role, protein phosphatase component of the sperm flagellar doublet microtubules. May act as a regulator of sperm motility by mediating dephosphorylation of sperm doublet microtubule proteins. Can dephosphorylate single and diphosphorylated synthetic MAPK peptides, with preference for the phosphotyrosine and diphosphorylated forms over phosphothreonine. The sequence is that of Dual specificity protein phosphatase 21 (DUSP21) from Homo sapiens (Human).